Here is a 631-residue protein sequence, read N- to C-terminus: MAKVNTQCSQPSPTQLSIKNADRDLDHVENGLGRVSRLIISIRAWASRHLHDEDQTPDSFLDRFHGSELKEVSTRESNAQPNPGEQKPPDGGEGRKEEPIVVDPSSNIYYRWLTAIALPVFYNWCLLVCRACFDELQSEHLTLWLVLDYSADVLYVLDMLVRARTGFLEQGLMVRDTKRLWKHYTKTLHFKLDILSLIPTDLAYLKLGVNYPELRFNRLLKFSRLFEFFDRTETRTNYPNVFRIGNLVLYTLIIIHWNACIYFAISKFIGFGTDSWVYPNTSKPEYARLSRKYIYSLYWSTLTLTTIGETPPPVKDEEYLFVVIDFLVGILIFATIVGNVGSMISNMNAPRVEFQAKIDSVKQYMQFRKVTKDLETRVIRWFDYLWANRKTVDEKEVLKNLPDKLKAEIAINVHLDTLKKVRIFQDCEAGLLVELVLKLRPTVFSPGDYICKKGDIGREMYIIKEGKLAVVADDGVTQFVVLSDGSYFGEISILNIKGSKSGNRRTANIRSIGYSDLFCLSKDDLMEALTEYPDAKRALEEKGRQILMKDNLIDEDLVAARVDTRDVEEKVEYLESSLDILQTRFARLLAEYSASQMKLKQRLTRLESQMNRRCCGFSPDRENSEDASKTD.

Over residues 1-18 (MAKVNTQCSQPSPTQLSI) the composition is skewed to polar residues. Disordered stretches follow at residues 1–21 (MAKV…IKNA) and 71–98 (EVST…RKEE). Over 1–111 (MAKVNTQCSQ…VDPSSNIYYR (111 aa)) the chain is Cytoplasmic. Basic and acidic residues predominate over residues 87–98 (KPPDGGEGRKEE). Residues 112 to 133 (WLTAIALPVFYNWCLLVCRACF) traverse the membrane as a helical segment. Residues 134–139 (DELQSE) are Extracellular-facing. The chain crosses the membrane as a helical span at residues 140–160 (HLTLWLVLDYSADVLYVLDML). The Cytoplasmic segment spans residues 161 to 187 (VRARTGFLEQGLMVRDTKRLWKHYTKT). The chain crosses the membrane as a helical span at residues 188–207 (LHFKLDILSLIPTDLAYLKL). The Extracellular portion of the chain corresponds to 208-211 (GVNY). A helical transmembrane segment spans residues 212–229 (PELRFNRLLKFSRLFEFF). The Cytoplasmic segment spans residues 230–239 (DRTETRTNYP). Positions 239-347 (PNVFRIGNLV…GNVGSMISNM (109 aa)) are ion conduction pathway. A helical transmembrane segment spans residues 240–262 (NVFRIGNLVLYTLIIIHWNACIY). Residues 263–288 (FAISKFIGFGTDSWVYPNTSKPEYAR) lie on the Extracellular side of the membrane. A glycan (N-linked (GalNAc...) asparagine) is linked at N280. Transmembrane regions (helical) follow at residues 289-319 (LSRK…DEEY) and 320-344 (LFVV…GSMI). A selectivity filter region spans residues 306-309 (TIGE). Residues 345 to 631 (SNMNAPRVEF…ENSEDASKTD (287 aa)) are Cytoplasmic-facing. The tract at residues 349 to 426 (APRVEFQAKI…TLKKVRIFQD (78 aa)) is C-linker. The tract at residues 429–549 (AGLLVELVLK…EEKGRQILMK (121 aa)) is cyclic nucleotide-binding domain. G489, E490, S492, R505, T506, and D550 together coordinate 3',5'-cyclic GMP. The stretch at 567 to 610 (VEEKVEYLESSLDILQTRFARLLAEYSASQMKLKQRLTRLESQM) forms a coiled coil.

It belongs to the cyclic nucleotide-gated cation channel (TC 1.A.1.5) family. CNGA3 subfamily. In terms of assembly, forms heterotetrameric channels composed of CNGA3 and CNGB3 subunits with 3:1 stoichiometry. Prominently expressed in retina.

It is found in the cell membrane. It carries out the reaction Ca(2+)(in) = Ca(2+)(out). The enzyme catalyses Na(+)(in) = Na(+)(out). It catalyses the reaction K(+)(in) = K(+)(out). The catalysed reaction is NH4(+)(in) = NH4(+)(out). It carries out the reaction Rb(+)(in) = Rb(+)(out). The enzyme catalyses Li(+)(in) = Li(+)(out). It catalyses the reaction Cs(+)(in) = Cs(+)(out). Functionally, pore-forming subunit of the cone cyclic nucleotide-gated channel. Mediates cone photoresponses at bright light converting transient changes in intracellular cGMP levels into electrical signals. In the dark, cGMP levels are high and keep the channel open enabling a steady inward current carried by Na(+) and Ca(2+) ions that leads to membrane depolarization and neurotransmitter release from synaptic terminals. Upon photon absorption cGMP levels decline leading to channel closure and membrane hyperpolarization that ultimately slows neurotransmitter release and signals the presence of light, the end point of the phototransduction cascade. Pore-forming subunit of the gustatory cyclic nucleotide-gated channel. In the taste buds, may sense oral extracellular pH and conduct ion currents that modulate the excitability of taste cells. Conducts cGMP- and cAMP-gated ion currents, with permeability for monovalent and divalent cations. In Mus musculus (Mouse), this protein is Cyclic nucleotide-gated channel alpha-3.